Consider the following 134-residue polypeptide: Small ribosomal subunit protein uS8c (134 aa).

This sequence belongs to the universal ribosomal protein uS8 family. In terms of assembly, part of the 30S ribosomal subunit.

It localises to the plastid. It is found in the chloroplast. In terms of biological role, one of the primary rRNA binding proteins, it binds directly to 16S rRNA central domain where it helps coordinate assembly of the platform of the 30S subunit. The chain is Small ribosomal subunit protein uS8c (rps8) from Cucumis sativus (Cucumber).